The sequence spans 61 residues: Large ribosomal subunit protein uL30 (61 aa).

The protein belongs to the universal ribosomal protein uL30 family. In terms of assembly, part of the 50S ribosomal subunit.

The protein is Large ribosomal subunit protein uL30 of Rhizorhabdus wittichii (strain DSM 6014 / CCUG 31198 / JCM 15750 / NBRC 105917 / EY 4224 / RW1) (Sphingomonas wittichii).